The sequence spans 675 residues: Cytoplasmic tyrosine-protein kinase BMX (675 aa).

The region spanning 4-111 is the PH domain; the sequence is KSILEELLLK…WLKALQKEIR (108 aa). Residues 113–149 form a Btk-type zinc finger; sequence NPHLLVKYHSGFFVDGKFLCCQQSCKAAPGCTLWEAY. Residues His121, Cys132, Cys133, and Cys143 each coordinate Zn(2+). Tyr216 and Tyr224 each carry phosphotyrosine; by autocatalysis. The region spanning 296-392 is the SH2 domain; the sequence is WFAGNISRSQ…GMITRLRHPV (97 aa). The 259-residue stretch at 417 to 675 folds into the Protein kinase domain; the sequence is ITLLKELGSG…IEPLREKDKH (259 aa). ATP contacts are provided by residues 423-431 and Lys445; that span reads LGSGQFGVV. Asp536 acts as the Proton acceptor in catalysis. Residue Tyr566 is modified to Phosphotyrosine; by SRC and autocatalysis. The short motif at 596–603 is the CAV1-binding element; sequence WAFGILMW.

The protein belongs to the protein kinase superfamily. Tyr protein kinase family. TEC subfamily. In terms of assembly, interacts with BCAR1, CAV1, MYD88, PTK2/FAK1, RUFY1, RUFY2, STAT3, TIRAP and TNFRSF1B. It depends on Zn(2+) as a cofactor. In terms of processing, phosphorylated in response to protein I/II and to LPS. Phosphorylation at Tyr-566 by SRC and by autocatalysis leads to activation and is required for STAT3 phosphorylation by BMX. In terms of tissue distribution, highly expressed in cells with great migratory potential, including endothelial cells and metastatic carcinoma cell lines.

It is found in the cytoplasm. It catalyses the reaction L-tyrosyl-[protein] + ATP = O-phospho-L-tyrosyl-[protein] + ADP + H(+). Its activity is regulated as follows. TEK and vascular endothelial growth factor receptor 1 (FLT1) stimulate BMX tyrosine kinase activity. Activated by integrins through the mediation of PTK2/FAK1. Activated by TNF through the mediation of TNFRSF1B. In terms of biological role, non-receptor tyrosine kinase that plays central but diverse modulatory roles in various signaling processes involved in the regulation of actin reorganization, cell migration, cell proliferation and survival, cell adhesion, and apoptosis. Participates in signal transduction stimulated by growth factor receptors, cytokine receptors, G-protein coupled receptors, antigen receptors and integrins. Induces tyrosine phosphorylation of BCAR1 in response to integrin regulation. Activation of BMX by integrins is mediated by PTK2/FAK1, a key mediator of integrin signaling events leading to the regulation of actin cytoskeleton and cell motility. Plays a critical role in TNF-induced angiogenesis, and implicated in the signaling of TEK and FLT1 receptors, 2 important receptor families essential for angiogenesis. Required for the phosphorylation and activation of STAT3, a transcription factor involved in cell differentiation. Also involved in interleukin-6 (IL6) induced differentiation. Also plays a role in programming adaptive cytoprotection against extracellular stress in different cell systems, salivary epithelial cells, brain endothelial cells, and dermal fibroblasts. May be involved in regulation of endocytosis through its interaction with an endosomal protein RUFY1. May also play a role in the growth and differentiation of hematopoietic cells; as well as in signal transduction in endocardial and arterial endothelial cells. The polypeptide is Cytoplasmic tyrosine-protein kinase BMX (BMX) (Homo sapiens (Human)).